The following is a 141-amino-acid chain: HTH-type transcriptional repressor NsrR (141 aa).

In terms of domain architecture, HTH rrf2-type spans 2-129; that stretch reads QLTSFTDYGL…DQYTLADMVK (128 aa). The segment at residues 28–51 is a DNA-binding region (H-T-H motif); sequence ISEVTEVYGVSRNHMVKIINQLSR. [2Fe-2S] cluster contacts are provided by C91, C96, and C102.

Requires [2Fe-2S] cluster as cofactor.

In terms of biological role, nitric oxide-sensitive repressor of genes involved in protecting the cell against nitrosative stress. May require iron for activity. This chain is HTH-type transcriptional repressor NsrR, found in Pectobacterium atrosepticum (strain SCRI 1043 / ATCC BAA-672) (Erwinia carotovora subsp. atroseptica).